The following is a 116-amino-acid chain: Large ribosomal subunit protein uL22 (116 aa).

This sequence belongs to the universal ribosomal protein uL22 family. In terms of assembly, part of the 50S ribosomal subunit.

Functionally, this protein binds specifically to 23S rRNA; its binding is stimulated by other ribosomal proteins, e.g. L4, L17, and L20. It is important during the early stages of 50S assembly. It makes multiple contacts with different domains of the 23S rRNA in the assembled 50S subunit and ribosome. Its function is as follows. The globular domain of the protein is located near the polypeptide exit tunnel on the outside of the subunit, while an extended beta-hairpin is found that lines the wall of the exit tunnel in the center of the 70S ribosome. The sequence is that of Large ribosomal subunit protein uL22 from Wolbachia pipientis subsp. Culex pipiens (strain wPip).